A 528-amino-acid chain; its full sequence is Phosphoenolpyruvate carboxykinase (ATP) (528 aa).

Residues Arg56, Tyr192, and Lys198 each coordinate substrate. ATP contacts are provided by residues Lys198, His217, and 233-241 (GLSGTGKTT). Lys198 and His217 together coordinate Mn(2+). Asp254 lines the Mn(2+) pocket. Residues Glu282, Arg319, and Thr444 each coordinate ATP. Arg319 serves as a coordination point for substrate.

This sequence belongs to the phosphoenolpyruvate carboxykinase (ATP) family. The cofactor is Mn(2+).

The protein localises to the cytoplasm. The enzyme catalyses oxaloacetate + ATP = phosphoenolpyruvate + ADP + CO2. Its pathway is carbohydrate biosynthesis; gluconeogenesis. Functionally, involved in the gluconeogenesis. Catalyzes the conversion of oxaloacetate (OAA) to phosphoenolpyruvate (PEP) through direct phosphoryl transfer between the nucleoside triphosphate and OAA. The protein is Phosphoenolpyruvate carboxykinase (ATP) of Lysinibacillus sphaericus (strain C3-41).